The chain runs to 429 residues: Adenylosuccinate synthetase (429 aa).

GTP-binding positions include 11–17 (GDEGKGK) and 39–41 (GHT). Aspartate 12 serves as the catalytic Proton acceptor. Mg(2+) is bound by residues aspartate 12 and glycine 39. IMP is bound by residues 12 to 15 (DEGK), 37 to 40 (NAGH), threonine 130, arginine 144, asparagine 226, threonine 241, and arginine 305. Catalysis depends on histidine 40, which acts as the Proton donor. Position 301-307 (301-307 (VTTGRRR)) interacts with substrate. GTP is bound by residues arginine 307, 333-335 (KLD), and 415-417 (GVG).

The protein belongs to the adenylosuccinate synthetase family. Homodimer. Mg(2+) is required as a cofactor.

It localises to the cytoplasm. It catalyses the reaction IMP + L-aspartate + GTP = N(6)-(1,2-dicarboxyethyl)-AMP + GDP + phosphate + 2 H(+). Its pathway is purine metabolism; AMP biosynthesis via de novo pathway; AMP from IMP: step 1/2. Functionally, plays an important role in the de novo pathway and in the salvage pathway of purine nucleotide biosynthesis. Catalyzes the first committed step in the biosynthesis of AMP from IMP. The sequence is that of Adenylosuccinate synthetase from Yarrowia lipolytica (strain CLIB 122 / E 150) (Yeast).